Consider the following 61-residue polypeptide: Photosystem II reaction center protein K (61 aa).

Positions 1 to 24 (MLNIFSLICICLNSALYSSNFFFA) are excised as a propeptide. A helical membrane pass occupies residues 40–60 (MPVIPLFFFLLAFVWQAAVSF).

The protein belongs to the PsbK family. In terms of assembly, PSII is composed of 1 copy each of membrane proteins PsbA, PsbB, PsbC, PsbD, PsbE, PsbF, PsbH, PsbI, PsbJ, PsbK, PsbL, PsbM, PsbT, PsbX, PsbY, PsbZ, Psb30/Ycf12, at least 3 peripheral proteins of the oxygen-evolving complex and a large number of cofactors. It forms dimeric complexes.

It localises to the plastid. It is found in the chloroplast thylakoid membrane. Its function is as follows. One of the components of the core complex of photosystem II (PSII). PSII is a light-driven water:plastoquinone oxidoreductase that uses light energy to abstract electrons from H(2)O, generating O(2) and a proton gradient subsequently used for ATP formation. It consists of a core antenna complex that captures photons, and an electron transfer chain that converts photonic excitation into a charge separation. This is Photosystem II reaction center protein K from Vitis vinifera (Grape).